The following is a 234-amino-acid chain: Peptidyl-prolyl cis-trans isomerase FKBP17-3, chloroplastic (234 aa).

The N-terminal 28 residues, 1 to 28 (MATLFTATVPSHHRFVSPSQHPKQSLLS), are a transit peptide targeting the chloroplast. Residues 130 to 228 (GYLVVFDVKG…DYIIEVDTVY (99 aa)) form the PPIase FKBP-type domain.

It belongs to the FKBP-type PPIase family.

The protein localises to the plastid. It localises to the chloroplast thylakoid lumen. The catalysed reaction is [protein]-peptidylproline (omega=180) = [protein]-peptidylproline (omega=0). Its function is as follows. PPIases accelerate the folding of proteins. It catalyzes the cis-trans isomerization of proline imidic peptide bonds in oligopeptides. The chain is Peptidyl-prolyl cis-trans isomerase FKBP17-3, chloroplastic (FKBP17-3) from Arabidopsis thaliana (Mouse-ear cress).